The primary structure comprises 359 residues: 4-hydroxy-tetrahydrodipicolinate synthase, chloroplastic (359 aa).

The transit peptide at 1-33 directs the protein to the chloroplast; that stretch reads MSSSIIGRCHFVADSIEAAGTKRRTTRWRSPRA. Threonine 102 contributes to the pyruvate binding site. Residue tyrosine 188 is the Proton donor/acceptor of the active site. Lysine 216 (schiff-base intermediate with substrate) is an active-site residue. Pyruvate is bound at residue isoleucine 255.

This sequence belongs to the DapA family.

The protein resides in the plastid. Its subcellular location is the chloroplast. The enzyme catalyses L-aspartate 4-semialdehyde + pyruvate = (2S,4S)-4-hydroxy-2,3,4,5-tetrahydrodipicolinate + H2O + H(+). It participates in amino-acid biosynthesis; L-lysine biosynthesis via DAP pathway; (S)-tetrahydrodipicolinate from L-aspartate: step 3/4. Catalyzes the condensation of (S)-aspartate-beta-semialdehyde [(S)-ASA] and pyruvate to 4-hydroxy-tetrahydrodipicolinate (HTPA). This chain is 4-hydroxy-tetrahydrodipicolinate synthase, chloroplastic (DHPS1), found in Nicotiana tabacum (Common tobacco).